Consider the following 373-residue polypeptide: tRNA-specific 2-thiouridylase MnmA (373 aa).

ATP is bound by residues 12 to 19 (GMSGGVDS) and M38. The tract at residues 98-100 (NPD) is interaction with target base in tRNA. Catalysis depends on C103, which acts as the Nucleophile. A disulfide bridge connects residues C103 and C200. Residue G127 participates in ATP binding. An interaction with tRNA region spans residues 150–152 (KDQ). The Cysteine persulfide intermediate role is filled by C200. The segment at 312 to 313 (RY) is interaction with tRNA.

Belongs to the MnmA/TRMU family.

The protein localises to the cytoplasm. The enzyme catalyses S-sulfanyl-L-cysteinyl-[protein] + uridine(34) in tRNA + AH2 + ATP = 2-thiouridine(34) in tRNA + L-cysteinyl-[protein] + A + AMP + diphosphate + H(+). Catalyzes the 2-thiolation of uridine at the wobble position (U34) of tRNA, leading to the formation of s(2)U34. In Streptococcus pneumoniae (strain ATCC 700669 / Spain 23F-1), this protein is tRNA-specific 2-thiouridylase MnmA.